The chain runs to 123 residues: Ribosome-binding factor A (123 aa).

It belongs to the RbfA family. Monomer. Binds 30S ribosomal subunits, but not 50S ribosomal subunits or 70S ribosomes.

The protein resides in the cytoplasm. One of several proteins that assist in the late maturation steps of the functional core of the 30S ribosomal subunit. Associates with free 30S ribosomal subunits (but not with 30S subunits that are part of 70S ribosomes or polysomes). Required for efficient processing of 16S rRNA. May interact with the 5'-terminal helix region of 16S rRNA. This chain is Ribosome-binding factor A, found in Legionella pneumophila (strain Lens).